The chain runs to 172 residues: Counting factor-associated protein B (172 aa).

Residues 1 to 21 form the signal peptide; sequence MKLLNSLILLVLTCLVSSINT. N-linked (GlcNAc...) asparagine glycosylation is found at Asn37 and Asn153.

It localises to the secreted. This is Counting factor-associated protein B (cfaB) from Dictyostelium discoideum (Social amoeba).